Reading from the N-terminus, the 260-residue chain is Thiazole synthase (260 aa).

The Schiff-base intermediate with DXP role is filled by Lys102. 1-deoxy-D-xylulose 5-phosphate contacts are provided by residues Gly163, 189–190 (AG), and 211–212 (NT).

It belongs to the ThiG family. Homotetramer. Forms heterodimers with either ThiH or ThiS.

The protein localises to the cytoplasm. The catalysed reaction is [ThiS sulfur-carrier protein]-C-terminal-Gly-aminoethanethioate + 2-iminoacetate + 1-deoxy-D-xylulose 5-phosphate = [ThiS sulfur-carrier protein]-C-terminal Gly-Gly + 2-[(2R,5Z)-2-carboxy-4-methylthiazol-5(2H)-ylidene]ethyl phosphate + 2 H2O + H(+). It functions in the pathway cofactor biosynthesis; thiamine diphosphate biosynthesis. Its function is as follows. Catalyzes the rearrangement of 1-deoxy-D-xylulose 5-phosphate (DXP) to produce the thiazole phosphate moiety of thiamine. Sulfur is provided by the thiocarboxylate moiety of the carrier protein ThiS. In vitro, sulfur can be provided by H(2)S. This chain is Thiazole synthase, found in Geobacter sp. (strain M21).